A 67-amino-acid polypeptide reads, in one-letter code: Conotoxin VnMMSK-03 (67 aa).

The N-terminal stretch at 1-20 (MMSKLGVVLTICLLPFPLTA) is a signal peptide. A propeptide spanning residues 21–50 (LPMDGDQPADLPALRTQDFEPERSPWFDPV) is cleaved from the precursor. 3 disulfides stabilise this stretch: Cys-53-Cys-65, Cys-54-Cys-61, and Cys-58-Cys-64. Pro-63 carries the 4-hydroxyproline modification.

It belongs to the conotoxin M superfamily. Expressed by the venom duct.

The protein resides in the secreted. This chain is Conotoxin VnMMSK-03, found in Conus ventricosus (Mediterranean cone).